The sequence spans 412 residues: Peptide chain release factor subunit 1 (412 aa).

Belongs to the eukaryotic release factor 1 family. In terms of assembly, heterodimer of two subunits, one of which binds GTP.

The protein localises to the cytoplasm. Its function is as follows. Directs the termination of nascent peptide synthesis (translation) in response to the termination codons UAA, UAG and UGA. This chain is Peptide chain release factor subunit 1, found in Methanobrevibacter smithii (strain ATCC 35061 / DSM 861 / OCM 144 / PS).